A 266-amino-acid polypeptide reads, in one-letter code: MYLELQIKKTHIFDLKGNKVEEIELPIFFSYPVRKDLIRRVFISEFTKALQPKGRDPMAGKRTSALSFGINLGLARVPRVKTTGEAALAPNTVGGRLAFPPTVEKKLVEEVNKKEKKLAIISALSATANMNFVKNRGHVFSIDTLPIIVVDDITKLTKTKEIIEVLESLKVYEDVERVKDRIRIRSGKGKMRGRRYKEPKGPLFVIHENNPVFVKAASNIPGVDVILASDLSVIHLAPGGHPGRLTIYTKSSIDVLRKRFEGRLAL.

It belongs to the universal ribosomal protein uL4 family. Part of the 50S ribosomal subunit.

One of the primary rRNA binding proteins, this protein initially binds near the 5'-end of the 23S rRNA. It is important during the early stages of 50S assembly. It makes multiple contacts with different domains of the 23S rRNA in the assembled 50S subunit and ribosome. In terms of biological role, forms part of the polypeptide exit tunnel. The sequence is that of Large ribosomal subunit protein uL4 from Sulfurisphaera tokodaii (strain DSM 16993 / JCM 10545 / NBRC 100140 / 7) (Sulfolobus tokodaii).